A 335-amino-acid chain; its full sequence is Beta-hexosaminidase (335 aa).

Substrate is bound by residues aspartate 60, arginine 68, arginine 133, and 163–164; that span reads KH. Histidine 176 serves as the catalytic Proton donor/acceptor. The active-site Nucleophile is aspartate 247.

The protein belongs to the glycosyl hydrolase 3 family. NagZ subfamily.

The protein resides in the cytoplasm. The enzyme catalyses Hydrolysis of terminal non-reducing N-acetyl-D-hexosamine residues in N-acetyl-beta-D-hexosaminides.. Its pathway is cell wall biogenesis; peptidoglycan recycling. Functionally, plays a role in peptidoglycan recycling by cleaving the terminal beta-1,4-linked N-acetylglucosamine (GlcNAc) from peptide-linked peptidoglycan fragments, giving rise to free GlcNAc, anhydro-N-acetylmuramic acid and anhydro-N-acetylmuramic acid-linked peptides. This chain is Beta-hexosaminidase, found in Xylella fastidiosa (strain M23).